An 88-amino-acid polypeptide reads, in one-letter code: Small ribosomal subunit protein uS17 (88 aa).

The protein belongs to the universal ribosomal protein uS17 family. Part of the 30S ribosomal subunit.

Its function is as follows. One of the primary rRNA binding proteins, it binds specifically to the 5'-end of 16S ribosomal RNA. In Saccharophagus degradans (strain 2-40 / ATCC 43961 / DSM 17024), this protein is Small ribosomal subunit protein uS17.